The primary structure comprises 427 residues: Adenylosuccinate synthetase (427 aa).

Residues 12–18 and 40–42 contribute to the GTP site; these read GDEGKGK and GHT. The Proton acceptor role is filled by Asp13. Mg(2+) contacts are provided by Asp13 and Gly40. IMP contacts are provided by residues 13-16, 38-41, Thr128, Arg142, Gln223, Thr238, and Arg302; these read DEGK and NAGH. The active-site Proton donor is His41. 298-304 contacts substrate; it reads VTTGRAR. GTP is bound by residues Arg304, 330 to 332, and 412 to 414; these read KLD and GVG.

This sequence belongs to the adenylosuccinate synthetase family. Homodimer. Mg(2+) serves as cofactor.

It localises to the cytoplasm. The enzyme catalyses IMP + L-aspartate + GTP = N(6)-(1,2-dicarboxyethyl)-AMP + GDP + phosphate + 2 H(+). Its pathway is purine metabolism; AMP biosynthesis via de novo pathway; AMP from IMP: step 1/2. Its function is as follows. Plays an important role in the de novo pathway of purine nucleotide biosynthesis. Catalyzes the first committed step in the biosynthesis of AMP from IMP. The sequence is that of Adenylosuccinate synthetase from Frankia alni (strain DSM 45986 / CECT 9034 / ACN14a).